Consider the following 216-residue polypeptide: Redox-sensing transcriptional repressor Rex (216 aa).

The H-T-H motif DNA-binding region spans 20-59 (QYYRLFKSLVEENVTRTNSQLISEKIGVDAATIRRDFSLF). 94-99 (GVGNLG) lines the NAD(+) pocket.

Belongs to the transcriptional regulatory Rex family. In terms of assembly, homodimer.

It localises to the cytoplasm. Its function is as follows. Modulates transcription in response to changes in cellular NADH/NAD(+) redox state. The polypeptide is Redox-sensing transcriptional repressor Rex (Lactococcus lactis subsp. cremoris (Streptococcus cremoris)).